The following is a 412-amino-acid chain: UPF0761 membrane protein LPC_2650 (412 aa).

A run of 6 helical transmembrane segments spans residues Ala-36–Phe-56, Leu-99–Glu-119, Ala-137–Ala-157, Ile-177–Val-197, Gly-210–Ile-230, and Ala-241–Leu-261.

This sequence belongs to the UPF0761 family.

The protein resides in the cell inner membrane. In Legionella pneumophila (strain Corby), this protein is UPF0761 membrane protein LPC_2650.